The primary structure comprises 170 residues: Acireductone dioxygenase (170 aa).

Fe(2+)-binding residues include H99, H101, E105, and H144. H99, H101, E105, and H144 together coordinate Ni(2+).

The protein belongs to the acireductone dioxygenase (ARD) family. Monomer. Fe(2+) serves as cofactor. Ni(2+) is required as a cofactor.

The catalysed reaction is 1,2-dihydroxy-5-(methylsulfanyl)pent-1-en-3-one + O2 = 3-(methylsulfanyl)propanoate + CO + formate + 2 H(+). It catalyses the reaction 1,2-dihydroxy-5-(methylsulfanyl)pent-1-en-3-one + O2 = 4-methylsulfanyl-2-oxobutanoate + formate + 2 H(+). Its pathway is amino-acid biosynthesis; L-methionine biosynthesis via salvage pathway; L-methionine from S-methyl-5-thio-alpha-D-ribose 1-phosphate: step 5/6. In terms of biological role, catalyzes 2 different reactions between oxygen and the acireductone 1,2-dihydroxy-3-keto-5-methylthiopentene (DHK-MTPene) depending upon the metal bound in the active site. Fe-containing acireductone dioxygenase (Fe-ARD) produces formate and 2-keto-4-methylthiobutyrate (KMTB), the alpha-ketoacid precursor of methionine in the methionine recycle pathway. Ni-containing acireductone dioxygenase (Ni-ARD) produces methylthiopropionate, carbon monoxide and formate, and does not lie on the methionine recycle pathway. The sequence is that of Acireductone dioxygenase from Bacillus thuringiensis subsp. konkukian (strain 97-27).